Consider the following 248-residue polypeptide: Triosephosphate isomerase (248 aa).

Position 11–13 (11–13) interacts with substrate; it reads NWK. Catalysis depends on His-95, which acts as the Electrophile. Glu-167 (proton acceptor) is an active-site residue. Residues Gly-173, Ser-212, and 233–234 each bind substrate; that span reads GG.

It belongs to the triosephosphate isomerase family. In terms of assembly, homodimer.

The protein resides in the cytoplasm. It carries out the reaction D-glyceraldehyde 3-phosphate = dihydroxyacetone phosphate. It functions in the pathway carbohydrate biosynthesis; gluconeogenesis. The protein operates within carbohydrate degradation; glycolysis; D-glyceraldehyde 3-phosphate from glycerone phosphate: step 1/1. Involved in the gluconeogenesis. Catalyzes stereospecifically the conversion of dihydroxyacetone phosphate (DHAP) to D-glyceraldehyde-3-phosphate (G3P). The polypeptide is Triosephosphate isomerase (Ralstonia nicotianae (strain ATCC BAA-1114 / GMI1000) (Ralstonia solanacearum)).